We begin with the raw amino-acid sequence, 210 residues long: 2-hydroxy-3-keto-5-methylthiopentenyl-1-phosphate phosphatase (210 aa).

Belongs to the HAD-like hydrolase superfamily. MtnX family.

The enzyme catalyses 2-hydroxy-5-methylsulfanyl-3-oxopent-1-enyl phosphate + H2O = 1,2-dihydroxy-5-(methylsulfanyl)pent-1-en-3-one + phosphate. It functions in the pathway amino-acid biosynthesis; L-methionine biosynthesis via salvage pathway; L-methionine from S-methyl-5-thio-alpha-D-ribose 1-phosphate: step 4/6. Dephosphorylates 2-hydroxy-3-keto-5-methylthiopentenyl-1-phosphate (HK-MTPenyl-1-P) yielding 1,2-dihydroxy-3-keto-5-methylthiopentene (DHK-MTPene). This Microcystis aeruginosa protein is 2-hydroxy-3-keto-5-methylthiopentenyl-1-phosphate phosphatase.